A 173-amino-acid chain; its full sequence is RNA pyrophosphohydrolase (173 aa).

The Nudix hydrolase domain occupies 11 to 164 (PYRRSVGILV…KKHVYMKIVN (154 aa)). The Nudix box motif lies at 52 to 73 (GGIDENEEPLDAARRELYEETG).

The protein belongs to the Nudix hydrolase family. RppH subfamily. The cofactor is a divalent metal cation.

Its function is as follows. Accelerates the degradation of transcripts by removing pyrophosphate from the 5'-end of triphosphorylated RNA, leading to a more labile monophosphorylated state that can stimulate subsequent ribonuclease cleavage. This is RNA pyrophosphohydrolase from Bartonella henselae (strain ATCC 49882 / DSM 28221 / CCUG 30454 / Houston 1) (Rochalimaea henselae).